The following is a 307-amino-acid chain: Ornithine carbamoyltransferase (307 aa).

Carbamoyl phosphate contacts are provided by residues 53 to 56, glutamine 80, arginine 104, and 131 to 134; these read STRT and HPCQ. L-ornithine contacts are provided by residues asparagine 162, aspartate 220, and 224–225; that span reads SM. Carbamoyl phosphate contacts are provided by residues 260–261 and arginine 288; that span reads CL.

The protein belongs to the aspartate/ornithine carbamoyltransferase superfamily. OTCase family.

It is found in the cytoplasm. The catalysed reaction is carbamoyl phosphate + L-ornithine = L-citrulline + phosphate + H(+). It participates in amino-acid biosynthesis; L-arginine biosynthesis; L-arginine from L-ornithine and carbamoyl phosphate: step 1/3. Its function is as follows. Reversibly catalyzes the transfer of the carbamoyl group from carbamoyl phosphate (CP) to the N(epsilon) atom of ornithine (ORN) to produce L-citrulline. This is Ornithine carbamoyltransferase from Nitrosomonas europaea (strain ATCC 19718 / CIP 103999 / KCTC 2705 / NBRC 14298).